A 294-amino-acid polypeptide reads, in one-letter code: Protein C3orf33 (294 aa).

Residue Ala2 is modified to N-acetylalanine. The chain crosses the membrane as a helical span at residues 40-56 (ISTGMAIAGIMLLLRSI).

As to expression, highly expressed in ileocecal tissue and endometrium.

It localises to the membrane. The protein resides in the secreted. Its function is as follows. Secreted protein may play a role in transcription regulation via the MAPK3/MAPK1 pathway through an unidentified receptor on the plasma membrane. This chain is Protein C3orf33 (C3orf33), found in Homo sapiens (Human).